Reading from the N-terminus, the 465-residue chain is Na(+)-translocating NADH-quinone reductase subunit A (465 aa).

The protein belongs to the NqrA family. As to quaternary structure, composed of six subunits; NqrA, NqrB, NqrC, NqrD, NqrE and NqrF.

The catalysed reaction is a ubiquinone + n Na(+)(in) + NADH + H(+) = a ubiquinol + n Na(+)(out) + NAD(+). Functionally, NQR complex catalyzes the reduction of ubiquinone-1 to ubiquinol by two successive reactions, coupled with the transport of Na(+) ions from the cytoplasm to the periplasm. NqrA to NqrE are probably involved in the second step, the conversion of ubisemiquinone to ubiquinol. The protein is Na(+)-translocating NADH-quinone reductase subunit A of Chlamydia trachomatis serovar L2b (strain UCH-1/proctitis).